The following is a 263-amino-acid chain: Hydroxyethylthiazole kinase 2 (263 aa).

Residue Met-42 participates in substrate binding. ATP is bound by residues Lys-118 and Thr-164. Gly-191 is a substrate binding site.

It belongs to the Thz kinase family. It depends on Mg(2+) as a cofactor.

It catalyses the reaction 5-(2-hydroxyethyl)-4-methylthiazole + ATP = 4-methyl-5-(2-phosphooxyethyl)-thiazole + ADP + H(+). Its pathway is cofactor biosynthesis; thiamine diphosphate biosynthesis; 4-methyl-5-(2-phosphoethyl)-thiazole from 5-(2-hydroxyethyl)-4-methylthiazole: step 1/1. Functionally, catalyzes the phosphorylation of the hydroxyl group of 4-methyl-5-beta-hydroxyethylthiazole (THZ). The polypeptide is Hydroxyethylthiazole kinase 2 (Clostridium botulinum (strain Loch Maree / Type A3)).